Reading from the N-terminus, the 121-residue chain is Large ribosomal subunit protein uL14c (121 aa).

It belongs to the universal ribosomal protein uL14 family. Part of the 50S ribosomal subunit.

Its subcellular location is the plastid. The protein localises to the chloroplast. In terms of biological role, binds to 23S rRNA. In Thalassiosira pseudonana (Marine diatom), this protein is Large ribosomal subunit protein uL14c.